A 409-amino-acid chain; its full sequence is Dual-specificity RNA methyltransferase RlmN (409 aa).

Glu-121 acts as the Proton acceptor in catalysis. Positions 127-376 (EEGRGTLCIS…IRTPRGRDIL (250 aa)) constitute a Radical SAM core domain. Cys-134 and Cys-379 are oxidised to a cystine. [4Fe-4S] cluster contacts are provided by Cys-141, Cys-145, and Cys-148. Residues 205-206 (GE), Ser-237, 259-261 (SLH), and Asn-336 contribute to the S-adenosyl-L-methionine site. The active-site S-methylcysteine intermediate is the Cys-379.

Belongs to the radical SAM superfamily. RlmN family. Requires [4Fe-4S] cluster as cofactor.

It localises to the cytoplasm. It carries out the reaction adenosine(2503) in 23S rRNA + 2 reduced [2Fe-2S]-[ferredoxin] + 2 S-adenosyl-L-methionine = 2-methyladenosine(2503) in 23S rRNA + 5'-deoxyadenosine + L-methionine + 2 oxidized [2Fe-2S]-[ferredoxin] + S-adenosyl-L-homocysteine. The enzyme catalyses adenosine(37) in tRNA + 2 reduced [2Fe-2S]-[ferredoxin] + 2 S-adenosyl-L-methionine = 2-methyladenosine(37) in tRNA + 5'-deoxyadenosine + L-methionine + 2 oxidized [2Fe-2S]-[ferredoxin] + S-adenosyl-L-homocysteine. Specifically methylates position 2 of adenine 2503 in 23S rRNA and position 2 of adenine 37 in tRNAs. m2A2503 modification seems to play a crucial role in the proofreading step occurring at the peptidyl transferase center and thus would serve to optimize ribosomal fidelity. The chain is Dual-specificity RNA methyltransferase RlmN from Rhizobium etli (strain ATCC 51251 / DSM 11541 / JCM 21823 / NBRC 15573 / CFN 42).